A 125-amino-acid chain; its full sequence is Acidic phospholipase A2 6 (125 aa).

A signal peptide is located at residue Ser1. Positions 2–7 (NRPMPL) are excised as a propeptide. Intrachain disulfides connect Cys18-Cys77, Cys33-Cys124, Cys35-Cys50, Cys49-Cys105, Cys56-Cys98, Cys66-Cys91, and Cys84-Cys96. Asp30 contributes to the Zn(2+) binding site. Residues Tyr34 and Gly36 each coordinate Ca(2+). His53 is a catalytic residue. Residue Asp54 coordinates Ca(2+). Asp99 is a catalytic residue.

In terms of assembly, heterodimer formed between isoform 5 and isoform 6 in presence of zinc ion and monomer in absence of zinc ion. Requires Ca(2+) as cofactor. As to expression, expressed by the venom gland.

Its subcellular location is the secreted. It carries out the reaction a 1,2-diacyl-sn-glycero-3-phosphocholine + H2O = a 1-acyl-sn-glycero-3-phosphocholine + a fatty acid + H(+). Functionally, PLA2 catalyzes the calcium-dependent hydrolysis of the 2-acyl groups in 3-sn-phosphoglycerides. The sequence is that of Acidic phospholipase A2 6 from Naja sagittifera (Andaman cobra).